We begin with the raw amino-acid sequence, 203 residues long: Glycerol-3-phosphate acyltransferase (203 aa).

The next 5 membrane-spanning stretches (helical) occupy residues 10-30, 59-79, 87-107, 116-136, and 160-180; these read MLIL…GLIL, GAAA…VLLA, AAQV…WLGF, FLGL…LSWL, and LVLL…LMVF.

It belongs to the PlsY family. Probably interacts with PlsX.

It localises to the cell inner membrane. It catalyses the reaction an acyl phosphate + sn-glycerol 3-phosphate = a 1-acyl-sn-glycero-3-phosphate + phosphate. Its pathway is lipid metabolism; phospholipid metabolism. Functionally, catalyzes the transfer of an acyl group from acyl-phosphate (acyl-PO(4)) to glycerol-3-phosphate (G3P) to form lysophosphatidic acid (LPA). This enzyme utilizes acyl-phosphate as fatty acyl donor, but not acyl-CoA or acyl-ACP. The polypeptide is Glycerol-3-phosphate acyltransferase (Ruegeria pomeroyi (strain ATCC 700808 / DSM 15171 / DSS-3) (Silicibacter pomeroyi)).